We begin with the raw amino-acid sequence, 26 residues long: Thioredoxin H-type (26 aa).

This sequence belongs to the thioredoxin family. Plant H-type subfamily.

The protein resides in the cytoplasm. Participates in various redox reactions through the reversible oxidation of the active center dithiol to a disulfide. The H form is known to activate a number of cytosolic enzymes. The sequence is that of Thioredoxin H-type from Populus euphratica (Euphrates poplar).